The primary structure comprises 360 residues: Photosystem II protein D1 (360 aa).

3 helical membrane passes run 30-47 (YVGW…AAAA), 119-134 (HFLI…QWEL), and 143-157 (WICV…AAFA). His119 contributes to the chlorophyll a binding site. A pheophytin a-binding site is contributed by Tyr127. Positions 171 and 190 each coordinate [CaMn4O5] cluster. A helical transmembrane segment spans residues 198-219 (FHMAGVAGMFGGSLFSAMHGSL). His199 serves as a coordination point for chlorophyll a. Residues His216 and 265–266 (SF) contribute to the a quinone site. His216 is a Fe cation binding site. Residue His273 coordinates Fe cation. Residues 275 to 289 (FLAVFPVVCVWLTSM) form a helical membrane-spanning segment. [CaMn4O5] cluster is bound by residues His333, Glu334, Asp343, and Ala345. Positions 346–360 (AAESTTVALSAPAIG) are excised as a propeptide.

Belongs to the reaction center PufL/M/PsbA/D family. As to quaternary structure, PSII is composed of 1 copy each of membrane proteins PsbA, PsbB, PsbC, PsbD, PsbE, PsbF, PsbH, PsbI, PsbJ, PsbK, PsbL, PsbM, PsbT, PsbX, PsbY, Psb30/Ycf12, peripheral proteins PsbO, CyanoQ (PsbQ), PsbU, PsbV and a large number of cofactors. It forms dimeric complexes. It depends on The D1/D2 heterodimer binds P680, chlorophylls that are the primary electron donor of PSII, and subsequent electron acceptors. It shares a non-heme iron and each subunit binds pheophytin, quinone, additional chlorophylls, carotenoids and lipids. D1 provides most of the ligands for the Mn4-Ca-O5 cluster of the oxygen-evolving complex (OEC). There is also a Cl(-1) ion associated with D1 and D2, which is required for oxygen evolution. The PSII complex binds additional chlorophylls, carotenoids and specific lipids. as a cofactor. Post-translationally, tyr-162 forms a radical intermediate that is referred to as redox-active TyrZ, YZ or Y-Z. In terms of processing, C-terminally processed by CtpA; processing is essential to allow assembly of the oxygen-evolving complex and thus photosynthetic growth.

It localises to the cellular thylakoid membrane. It carries out the reaction 2 a plastoquinone + 4 hnu + 2 H2O = 2 a plastoquinol + O2. In terms of biological role, photosystem II (PSII) is a light-driven water:plastoquinone oxidoreductase that uses light energy to abstract electrons from H(2)O, generating O(2) and a proton gradient subsequently used for ATP formation. It consists of a core antenna complex that captures photons, and an electron transfer chain that converts photonic excitation into a charge separation. The D1/D2 (PsbA/PsbD) reaction center heterodimer binds P680, the primary electron donor of PSII as well as several subsequent electron acceptors. The protein is Photosystem II protein D1 of Prochlorococcus marinus (strain MIT 9312).